Reading from the N-terminus, the 231-residue chain is ATP phosphoribosyltransferase (231 aa).

The protein belongs to the ATP phosphoribosyltransferase family. Short subfamily. In terms of assembly, heteromultimer composed of HisG and HisZ subunits.

The protein localises to the cytoplasm. It catalyses the reaction 1-(5-phospho-beta-D-ribosyl)-ATP + diphosphate = 5-phospho-alpha-D-ribose 1-diphosphate + ATP. It functions in the pathway amino-acid biosynthesis; L-histidine biosynthesis; L-histidine from 5-phospho-alpha-D-ribose 1-diphosphate: step 1/9. Functionally, catalyzes the condensation of ATP and 5-phosphoribose 1-diphosphate to form N'-(5'-phosphoribosyl)-ATP (PR-ATP). Has a crucial role in the pathway because the rate of histidine biosynthesis seems to be controlled primarily by regulation of HisG enzymatic activity. This is ATP phosphoribosyltransferase from Psychrobacter arcticus (strain DSM 17307 / VKM B-2377 / 273-4).